A 140-amino-acid polypeptide reads, in one-letter code: 3-hydroxyacyl-[acyl-carrier-protein] dehydratase FabZ (140 aa).

The active site involves His47.

This sequence belongs to the thioester dehydratase family. FabZ subfamily.

It is found in the cytoplasm. The catalysed reaction is a (3R)-hydroxyacyl-[ACP] = a (2E)-enoyl-[ACP] + H2O. Involved in unsaturated fatty acids biosynthesis. Catalyzes the dehydration of short chain beta-hydroxyacyl-ACPs and long chain saturated and unsaturated beta-hydroxyacyl-ACPs. The polypeptide is 3-hydroxyacyl-[acyl-carrier-protein] dehydratase FabZ (Streptococcus pneumoniae serotype 2 (strain D39 / NCTC 7466)).